The chain runs to 548 residues: Mannosyltransferase APTG1 (548 aa).

The interval 1–23 (MDIRKRKNAGGDGDGGADGASVN) is disordered. Helical transmembrane passes span 41–61 (IFLF…TYFN), 98–118 (LFAF…YIMI), and 146–166 (GNVA…FFCL). N-linked (GlcNAc...) asparagine glycosylation occurs at Asn-167. Transmembrane regions (helical) follow at residues 169 to 189 (TFSN…WPCI), 204 to 224 (LVIA…WLYV), 238 to 258 (FIIL…CLLD), 260 to 280 (LMYG…FLSS), 294 to 314 (FTQG…AGII), 320 to 340 (KLSA…HKEF), and 342 to 362 (FVLP…AQME). N-linked (GlcNAc...) asparagine glycosylation is present at Asn-382. The chain crosses the membrane as a helical span at residues 392–412 (LSVYFLLATNIPMALYMSLFH). Residue Asn-490 is glycosylated (N-linked (GlcNAc...) asparagine).

It belongs to the glycosyltransferase 22 family. As to expression, mostly expressed, mainly in vascular tissues, in leaves, roots, stems, flowers, siliques and pollen, and, to a lower extent, in seedlings.

It is found in the endoplasmic reticulum membrane. In terms of biological role, mannosyltransferase involved in glycosylphosphatidylinositol-anchor biosynthesis. Required for the pollen tube micropylar guidance and embryo development by regulating GPI-anchor mediated protein localization (e.g. COBL10 and A36). The chain is Mannosyltransferase APTG1 from Arabidopsis thaliana (Mouse-ear cress).